We begin with the raw amino-acid sequence, 602 residues long: Adenylosuccinate synthetase (602 aa).

GTP is bound by residues 74–80 (GDEGKGK) and 104–106 (GHT). The Proton acceptor role is filled by Asp-75. The Mg(2+) site is built by Asp-75 and Gly-104. Residues 75–78 (DEGK), 102–105 (NAGH), Thr-189, Lys-203, Gln-315, Thr-331, and Lys-459 contribute to the IMP site. Catalysis depends on His-105, which acts as the Proton donor. 455–461 (AVTKKPR) provides a ligand contact to substrate. Residues Arg-461 and 589-591 (GNG) each bind GTP.

This sequence belongs to the adenylosuccinate synthetase family. Homodimer. The cofactor is Mg(2+).

Its subcellular location is the cytoplasm. It catalyses the reaction IMP + L-aspartate + GTP = N(6)-(1,2-dicarboxyethyl)-AMP + GDP + phosphate + 2 H(+). It participates in purine metabolism; AMP biosynthesis via de novo pathway; AMP from IMP: step 1/2. Functionally, plays an important role in the salvage pathway for purine nucleotide biosynthesis. Catalyzes the first committed step in the biosynthesis of AMP from IMP. In Trypanosoma brucei gambiense (strain MHOM/CI/86/DAL972), this protein is Adenylosuccinate synthetase.